The chain runs to 331 residues: Ornithine carbamoyltransferase (331 aa).

Carbamoyl phosphate is bound by residues serine 55–threonine 58, glutamine 82, arginine 106, and histidine 133–glutamine 136. L-ornithine is bound by residues asparagine 166, aspartate 230, and serine 234 to methionine 235. Carbamoyl phosphate-binding positions include cysteine 272–leucine 273 and arginine 317.

Belongs to the aspartate/ornithine carbamoyltransferase superfamily. OTCase family.

It localises to the cytoplasm. The catalysed reaction is carbamoyl phosphate + L-ornithine = L-citrulline + phosphate + H(+). Its pathway is amino-acid biosynthesis; L-arginine biosynthesis; L-arginine from L-ornithine and carbamoyl phosphate: step 1/3. Its function is as follows. Reversibly catalyzes the transfer of the carbamoyl group from carbamoyl phosphate (CP) to the N(epsilon) atom of ornithine (ORN) to produce L-citrulline. This Neisseria gonorrhoeae (strain ATCC 700825 / FA 1090) protein is Ornithine carbamoyltransferase.